The primary structure comprises 540 residues: Chaperonin GroEL (540 aa).

ATP is bound by residues 29–32, 86–90, glycine 413, 476–478, and aspartate 492; these read TIGP, DGTTT, and NAA.

This sequence belongs to the chaperonin (HSP60) family. Forms a cylinder of 14 subunits composed of two heptameric rings stacked back-to-back. Interacts with the co-chaperonin GroES.

The protein resides in the cytoplasm. It carries out the reaction ATP + H2O + a folded polypeptide = ADP + phosphate + an unfolded polypeptide.. In terms of biological role, together with its co-chaperonin GroES, plays an essential role in assisting protein folding. The GroEL-GroES system forms a nano-cage that allows encapsulation of the non-native substrate proteins and provides a physical environment optimized to promote and accelerate protein folding. The sequence is that of Chaperonin GroEL from Staphylococcus saprophyticus subsp. saprophyticus (strain ATCC 15305 / DSM 20229 / NCIMB 8711 / NCTC 7292 / S-41).